The sequence spans 597 residues: DNA primase (597 aa).

C40, H43, C61, and C64 together coordinate Zn(2+). The CHC2-type zinc finger occupies C40 to C64. The Toprim domain maps to Q262–G342. Residues E268, D311, and D313 each contribute to the Mg(2+) site. The span at L429–T447 shows a compositional bias: basic and acidic residues. Residues L429–A448 form a disordered region.

The protein belongs to the DnaG primase family. Monomer. Interacts with replicative helicase DnaB, as DnaB(6):DnaG(3). A stable complex DnaI(6):DnaB(6):DnaG(3) fragment can be isolated; DnaI and DnaG do not contact each other (DnaI in this complex is derived from B.subtilis). Requires Zn(2+) as cofactor. Mg(2+) serves as cofactor.

The catalysed reaction is ssDNA + n NTP = ssDNA/pppN(pN)n-1 hybrid + (n-1) diphosphate.. In terms of biological role, RNA polymerase that catalyzes the synthesis of short RNA molecules used as primers for DNA polymerase during DNA replication. This is DNA primase from Geobacillus stearothermophilus (Bacillus stearothermophilus).